Here is a 92-residue protein sequence, read N- to C-terminus: Probable Fe(2+)-trafficking protein (92 aa).

The protein belongs to the Fe(2+)-trafficking protein family.

Functionally, could be a mediator in iron transactions between iron acquisition and iron-requiring processes, such as synthesis and/or repair of Fe-S clusters in biosynthetic enzymes. This is Probable Fe(2+)-trafficking protein from Shewanella loihica (strain ATCC BAA-1088 / PV-4).